A 149-amino-acid chain; its full sequence is Large ribosomal subunit protein uL15 (149 aa).

The disordered stretch occupies residues 30 to 63 (GLGKTAGRGHKGSFARKGGGKIKPGFEGGQTPMQ). A compositionally biased stretch (basic residues) spans 36-49 (GRGHKGSFARKGGG).

Belongs to the universal ribosomal protein uL15 family. As to quaternary structure, part of the 50S ribosomal subunit.

Functionally, binds to the 23S rRNA. This chain is Large ribosomal subunit protein uL15, found in Xylella fastidiosa (strain 9a5c).